Consider the following 205-residue polypeptide: uncharacterized protein (205 aa).

In terms of domain architecture, GST N-terminal spans 1–82; it reads MIKVYGVPGW…MVLDRRPDLA (82 aa). Residues V53 and 66–67 contribute to the glutathione site; that span reads ET. Residues 86–205 enclose the GST C-terminal domain; that stretch reads GRAERQLFQR…QEVLKRNEII (120 aa).

This sequence belongs to the GST superfamily. Beta family.

This is an uncharacterized protein from Escherichia coli (strain K12).